We begin with the raw amino-acid sequence, 2144 residues long: Reducing polyketide synthase PKS2 (2144 aa).

In terms of domain architecture, Ketosynthase family 3 (KS3) spans Pro10–Ala436. Residues Cys183, His319, and His360 each act as for beta-ketoacyl synthase activity in the active site. The interval Val538–Ala855 is malonyl-CoA:ACP transacylase (MAT). Residues His924–Asp1058 are N-terminal hotdog fold. Residues His924–Asp1214 form a dehydratase (DH) domain region. Positions His924–Gln1237 constitute a PKS/mFAS DH domain. A C-terminal hotdog fold region spans residues His1076–Gln1237. Residues Gly1461 to Leu1747 are enoyl reductase (ER) domain. The tract at residues Ala1771–Val1948 is ketoreductase (KR) domain. A Carrier domain is found at Glu2059–Arg2136. Position 2096 is an O-(pantetheine 4'-phosphoryl)serine (Ser2096).

Its pathway is mycotoxin biosynthesis. Functionally, reducing polyketide synthase (PKS); part of the Tox1A locus, one of the 2 loci that mediate the biosynthesis of T-toxin, a family of linear polyketides 37 to 45 carbons in length, of which the major component is 41 carbons, and which leads to high virulence to maize. One of the PKSs (PKS1 or PKS2) could synthesize a precursor, used subsequently by the other PKS as starter unit, to add additional carbons. Variability in the length of the final carbon backbone C35-47 could be achieved by varying the number of condensation cycles, or use of different starter or extender units or might be due to decarboxylation of the penultimate product, catalyzed by DEC1. Additional proteins are required for the biosynthesis of T-toxin, including oxidoreductases RED1, RED2, RED3, LAM1 and OXI1, as well as esterase TOX9. In Cochliobolus heterostrophus (strain C4 / ATCC 48331 / race T) (Southern corn leaf blight fungus), this protein is Reducing polyketide synthase PKS2.